Reading from the N-terminus, the 357-residue chain is Fluoren-9-ol dehydrogenase (357 aa).

Residues 36 to 67 (VTGGARGIGRSLCEGLLRAGAKVVAADLTWDD) and D87 contribute to the NADP(+) site. Catalysis depends on Y198, which acts as the Proton acceptor. K202 contributes to the NADP(+) binding site.

This sequence belongs to the short-chain dehydrogenases/reductases (SDR) family.

The enzyme catalyses 9H-fluoren-9-ol + NADP(+) = 9H-fluoren-9-one + NADPH + H(+). It carries out the reaction 9H-fluoren-9-ol + NAD(+) = 9H-fluoren-9-one + NADH + H(+). It participates in aromatic compound metabolism. In terms of biological role, catalyzes the dehydrogenation of both 9-fluorenol and 1,1a-dihydroxy-1-hydro-9-fluorenone to produce 9-fluorenone and 2'-carboxy-2,3- dihydroxybiphenyl, respectively. The chain is Fluoren-9-ol dehydrogenase from Terrabacter sp. (strain DBF63).